A 582-amino-acid polypeptide reads, in one-letter code: DNA mismatch repair protein MutL (582 aa).

Belongs to the DNA mismatch repair MutL/HexB family.

Functionally, this protein is involved in the repair of mismatches in DNA. It is required for dam-dependent methyl-directed DNA mismatch repair. May act as a 'molecular matchmaker', a protein that promotes the formation of a stable complex between two or more DNA-binding proteins in an ATP-dependent manner without itself being part of a final effector complex. The protein is DNA mismatch repair protein MutL of Chlamydia abortus (strain DSM 27085 / S26/3) (Chlamydophila abortus).